The following is a 152-amino-acid chain: Deoxyuridine 5'-triphosphate nucleotidohydrolase (152 aa).

Residues arginine 72 to glycine 74, asparagine 85, and threonine 89 to aspartate 91 each bind substrate.

It belongs to the dUTPase family. Requires Mg(2+) as cofactor.

The enzyme catalyses dUTP + H2O = dUMP + diphosphate + H(+). The protein operates within pyrimidine metabolism; dUMP biosynthesis; dUMP from dCTP (dUTP route): step 2/2. In terms of biological role, this enzyme is involved in nucleotide metabolism: it produces dUMP, the immediate precursor of thymidine nucleotides and it decreases the intracellular concentration of dUTP so that uracil cannot be incorporated into DNA. This chain is Deoxyuridine 5'-triphosphate nucleotidohydrolase, found in Nitrobacter hamburgensis (strain DSM 10229 / NCIMB 13809 / X14).